Here is a 230-residue protein sequence, read N- to C-terminus: Probable septum site-determining protein MinC (230 aa).

This sequence belongs to the MinC family. Interacts with MinD and FtsZ.

Cell division inhibitor that blocks the formation of polar Z ring septums. Rapidly oscillates between the poles of the cell to destabilize FtsZ filaments that have formed before they mature into polar Z rings. Prevents FtsZ polymerization. This Erwinia tasmaniensis (strain DSM 17950 / CFBP 7177 / CIP 109463 / NCPPB 4357 / Et1/99) protein is Probable septum site-determining protein MinC.